The chain runs to 175 residues: MNRDDKAALVSQLNDSFGRAKLSVVADYCGLKVSELQQIRIELKGCDSEIRVAKNTLLKRAADGTGTAVLADDFTGTTAVITSYSDPVGPAKVLTQFAGGHEKFVIRSAALEGEKIGVDRLEALAKLPSREVLLGQLLSTWNNVPTGLVRVLSGVPRTFVYGLQALKDQKEQEGK.

It belongs to the universal ribosomal protein uL10 family. In terms of assembly, part of the ribosomal stalk of the 50S ribosomal subunit. The N-terminus interacts with L11 and the large rRNA to form the base of the stalk. The C-terminus forms an elongated spine to which L12 dimers bind in a sequential fashion forming a multimeric L10(L12)X complex.

Its function is as follows. Forms part of the ribosomal stalk, playing a central role in the interaction of the ribosome with GTP-bound translation factors. This chain is Large ribosomal subunit protein uL10, found in Desulfotalea psychrophila (strain LSv54 / DSM 12343).